A 490-amino-acid chain; its full sequence is Homoserine O-acetyltransferase (490 aa).

Residues 47-353 form the AB hydrolase-1 domain; it reads NAILVCHALT…SQFGHDAFLI (307 aa). Residue Ser152 is the Nucleophile of the active site. Arg221 contacts substrate. Active-site residues include Asp315 and His348. Asp349 contributes to the substrate binding site. CBS domains follow at residues 375–432 and 436–490; these read MNTQ…YTSL and MSSQ…GRGP.

Belongs to the AB hydrolase superfamily. MetX family. Homodimer.

It is found in the cytoplasm. It catalyses the reaction L-homoserine + acetyl-CoA = O-acetyl-L-homoserine + CoA. The protein operates within amino-acid biosynthesis; L-methionine biosynthesis via de novo pathway; O-acetyl-L-homoserine from L-homoserine: step 1/1. Transfers an acetyl group from acetyl-CoA to L-homoserine, forming acetyl-L-homoserine. This chain is Homoserine O-acetyltransferase, found in Methanosphaerula palustris (strain ATCC BAA-1556 / DSM 19958 / E1-9c).